A 647-amino-acid polypeptide reads, in one-letter code: Threonine--tRNA ligase (647 aa).

Residues 1–61 (MIKITFPDGA…EEDGSIEIVT (61 aa)) enclose the TGS domain. The catalytic stretch occupies residues 240–538 (DHRKLGKELD…LIETYKGAFP (299 aa)). Zn(2+) is bound by residues Cys-334, His-385, and His-515.

Belongs to the class-II aminoacyl-tRNA synthetase family. As to quaternary structure, homodimer. The cofactor is Zn(2+).

It is found in the cytoplasm. It carries out the reaction tRNA(Thr) + L-threonine + ATP = L-threonyl-tRNA(Thr) + AMP + diphosphate + H(+). Its function is as follows. Catalyzes the attachment of threonine to tRNA(Thr) in a two-step reaction: L-threonine is first activated by ATP to form Thr-AMP and then transferred to the acceptor end of tRNA(Thr). Also edits incorrectly charged L-seryl-tRNA(Thr). In Streptococcus pyogenes serotype M3 (strain ATCC BAA-595 / MGAS315), this protein is Threonine--tRNA ligase.